We begin with the raw amino-acid sequence, 324 residues long: Heat-inducible transcription repressor HrcA (324 aa).

This sequence belongs to the HrcA family.

In terms of biological role, negative regulator of class I heat shock genes (grpE-dnaK-dnaJ and groELS operons). Prevents heat-shock induction of these operons. This chain is Heat-inducible transcription repressor HrcA, found in Synechococcus sp. (strain CC9902).